Reading from the N-terminus, the 297-residue chain is Protoheme IX farnesyltransferase (297 aa).

The next 9 helical transmembrane spans lie at 26–46, 48–68, 96–116, 120–140, 147–167, 174–194, 218–238, 243–263, and 276–296; these read VTQLAVFCAVIGMFLATPGMV, YPVLFGGIAGIWLLAGAAFAV, FHIIIFSIILGSLGMIILWNF, LTMWLTLATFVGYAVIYTWLL, NIVIGGLSGAMPPALGWAAVT, AWLLVLIIFVWTPPHFWALAL, LLNILLYTLILIAATLLPYIY, IIYLISAIVLGLMFLAYVIAL, and FRFSITYLSLLFAALLIDHYF.

Belongs to the UbiA prenyltransferase family. Protoheme IX farnesyltransferase subfamily.

Its subcellular location is the cell membrane. It catalyses the reaction heme b + (2E,6E)-farnesyl diphosphate + H2O = Fe(II)-heme o + diphosphate. Its pathway is porphyrin-containing compound metabolism; heme O biosynthesis; heme O from protoheme: step 1/1. Functionally, converts heme B (protoheme IX) to heme O by substitution of the vinyl group on carbon 2 of heme B porphyrin ring with a hydroxyethyl farnesyl side group. The sequence is that of Protoheme IX farnesyltransferase from Polynucleobacter asymbioticus (strain DSM 18221 / CIP 109841 / QLW-P1DMWA-1) (Polynucleobacter necessarius subsp. asymbioticus).